We begin with the raw amino-acid sequence, 337 residues long: uncharacterized protein (337 aa).

It belongs to the NAD(P)-dependent epimerase/dehydratase family.

This is an uncharacterized protein from Escherichia coli (strain K12).